We begin with the raw amino-acid sequence, 27 residues long: Dermaseptin-like peptide (27 aa).

Its function is as follows. Has antimicrobial activity against the Gram-positive bacterium M.luteus and the yeast C.albicans. Has hemolytic activity on human and duck erythrocytes. The sequence is that of Dermaseptin-like peptide from Schistosoma mansoni (Blood fluke).